We begin with the raw amino-acid sequence, 175 residues long: DM domain-containing protein mab-23 (175 aa).

Positions 8–56 (CQLCANHGIFNQPKKGHKQKCPYRTCPCSLCALNTKRRALDQIERQLKH) form a DNA-binding region, DM. Positions 58–93 (NEPMTGQTATSMASPTPECPLSPTTPKMTPHTPTSG) are disordered. Residues 59–71 (EPMTGQTATSMAS) show a composition bias toward polar residues. Positions 81 to 91 (TTPKMTPHTPT) are enriched in low complexity.

Expressed in a limited number of non-sex-specific tissues in males, including 6-8 unidentified neurons of the head, ventral body wall muscle, and the PHCL/R neurons.

It is found in the nucleus. In terms of biological role, probable transcription factor that plays a role in the development of the dopaminergic neurons of the male-specific genital sensilla (simple sense organs) known as rays, by negatively regulating the activity of the transcription factor ast-1. Involved in male mating behavior, probably as a result of a role in the differentiation of male-specific diagonal muscles. Required for development of the male proctodeum. May be dispensable in hermaphrodites. This is DM domain-containing protein mab-23 from Caenorhabditis elegans.